The following is a 576-amino-acid chain: Arginine--tRNA ligase (576 aa).

The 'HIGH' region signature appears at 122–132 (PNVAKQMHVGH).

Belongs to the class-I aminoacyl-tRNA synthetase family. Monomer.

It is found in the cytoplasm. The enzyme catalyses tRNA(Arg) + L-arginine + ATP = L-arginyl-tRNA(Arg) + AMP + diphosphate. The chain is Arginine--tRNA ligase from Yersinia pseudotuberculosis serotype I (strain IP32953).